The sequence spans 370 residues: DNA replication and repair protein RecF (370 aa).

30–37 (GENAQGKT) provides a ligand contact to ATP.

This sequence belongs to the RecF family.

The protein localises to the cytoplasm. In terms of biological role, the RecF protein is involved in DNA metabolism; it is required for DNA replication and normal SOS inducibility. RecF binds preferentially to single-stranded, linear DNA. It also seems to bind ATP. The polypeptide is DNA replication and repair protein RecF (Bacillus pumilus (strain SAFR-032)).